A 254-amino-acid chain; its full sequence is Syntaxin-6 (254 aa).

Residues 1 to 233 (MSMEDPFFVV…VSHMTSDRRQ (233 aa)) lie on the Cytoplasmic side of the membrane. Positions 46-72 (TTNELRNNLRSIEWDLEDLDETISIVE) form a coiled coil. The disordered stretch occupies residues 103-138 (KDQMSNSSMQALAERKNRQALLGESSSQSWSSGPDK). One can recognise a t-SNARE coiled-coil homology domain in the interval 162 to 224 (QLIVEQQDEQ…DNVMKKLAKV (63 aa)). A helical; Anchor for type IV membrane protein transmembrane segment spans residues 234 to 254 (WCAIIVLFVILLVVLVLFLVL).

The protein belongs to the syntaxin family.

The protein resides in the golgi apparatus membrane. Its subcellular location is the golgi apparatus. The protein localises to the trans-Golgi network membrane. It localises to the recycling endosome membrane. Functionally, SNARE promoting movement of transport vesicles to target membranes. Targets endosomes to the trans-Golgi network, and may therefore function in retrograde trafficking. Together with SNARE STX12, promotes movement of vesicles from endosomes to the cell membrane, and may therefore function in the endocytic recycling pathway. The sequence is that of Syntaxin-6 (STX6) from Gallus gallus (Chicken).